A 282-amino-acid chain; its full sequence is tRNA (guanine-N(1)-)-methyltransferase (282 aa).

Residue 145–150 (IGDYVL) participates in S-adenosyl-L-methionine binding.

This sequence belongs to the RNA methyltransferase TrmD family. As to quaternary structure, homodimer.

The protein resides in the cytoplasm. The enzyme catalyses guanosine(37) in tRNA + S-adenosyl-L-methionine = N(1)-methylguanosine(37) in tRNA + S-adenosyl-L-homocysteine + H(+). Its function is as follows. Specifically methylates guanosine-37 in various tRNAs. In Streptomyces avermitilis (strain ATCC 31267 / DSM 46492 / JCM 5070 / NBRC 14893 / NCIMB 12804 / NRRL 8165 / MA-4680), this protein is tRNA (guanine-N(1)-)-methyltransferase.